Reading from the N-terminus, the 305-residue chain is Insulin-like growth factor-binding protein 2 (305 aa).

The signal sequence occupies residues 1-34; sequence MLPRLGGPALPLLLPSLLLLLLLGAGGCGPGVRA. One can recognise an IGFBP N-terminal domain in the interval 36–118; sequence VLFRCPPCTP…VTGAGTCEKR (83 aa). 9 disulfide bridges follow: Cys40-Cys68, Cys43-Cys70, Cys51-Cys71, Cys59-Cys74, Cys82-Cys95, Cys89-Cys115, Cys207-Cys241, Cys252-Cys263, and Cys265-Cys286. The 83-residue stretch at 204–286 folds into the Thyroglobulin type-1 domain; sequence RTPCQQELDQ…APTIRGDPEC (83 aa). The Cell attachment site signature appears at 281–283; the sequence is RGD.

Interacts with IGF1. Interacts with IGF2. Interacts (via RGD motif) with integrin alpha5/ITGA5; this interaction induces cell migration, adhesion or apoptosis according to the context. Interacts with PTPRB; this interaction leads to PTPRB dimerization and inactivation. Cleaved by MMP9 leading to release of free IGF2 from IGFBP2-IGF2 complex, which contributes to enhance the motility and the growth of astrocytes. Post-translationally, O-glycosylated. As to expression, highly expressed in adult liver, but also in kidney, lung, brain, spleen, testis and ovary.

The protein resides in the secreted. Its function is as follows. Multifunctional protein that plays a critical role in regulating the availability of IGFs such as IGF1 and IGF2 to their receptors and thereby regulates IGF-mediated cellular processes including proliferation, differentiation, and apoptosis in a cell-type specific manner. Functions coordinately with receptor protein tyrosine phosphatase beta/PTPRB and the IGF1 receptor to regulate IGF1-mediated signaling by stimulating the phosphorylation of PTEN leading to its inactivation and AKT1 activation. Plays a positive role in cell migration via interaction with integrin alpha5/ITGA5 through an RGD motif. Additionally, interaction with ITGA5/ITGB1 enhances the adhesion of endothelial progenitor cells to endothelial cells. Upon mitochondrial damage, facilitates apoptosis with ITGA5 of podocytes, and then activates the phosphorylation of focal adhesion kinase (FAK)-mediated mitochondrial injury. This chain is Insulin-like growth factor-binding protein 2 (Igfbp2), found in Mus musculus (Mouse).